Consider the following 176-residue polypeptide: Ribosome maturation factor RimM (176 aa).

The region spanning Lys102–Trp175 is the PRC barrel domain.

The protein belongs to the RimM family. In terms of assembly, binds ribosomal protein uS19.

It is found in the cytoplasm. In terms of biological role, an accessory protein needed during the final step in the assembly of 30S ribosomal subunit, possibly for assembly of the head region. Essential for efficient processing of 16S rRNA. May be needed both before and after RbfA during the maturation of 16S rRNA. It has affinity for free ribosomal 30S subunits but not for 70S ribosomes. The protein is Ribosome maturation factor RimM of Buchnera aphidicola subsp. Acyrthosiphon pisum (strain APS) (Acyrthosiphon pisum symbiotic bacterium).